The chain runs to 126 residues: Protein translocase subunit SecE (126 aa).

3 consecutive transmembrane segments (helical) span residues 18–38, 40–60, and 97–117; these read LKWV…YLYG, LSVV…LGVA, and IVLA…GIMV.

The protein belongs to the SecE/SEC61-gamma family. As to quaternary structure, component of the Sec protein translocase complex. Heterotrimer consisting of SecY, SecE and SecG subunits. The heterotrimers can form oligomers, although 1 heterotrimer is thought to be able to translocate proteins. Interacts with the ribosome. Interacts with SecDF, and other proteins may be involved. Interacts with SecA.

The protein resides in the cell inner membrane. Essential subunit of the Sec protein translocation channel SecYEG. Clamps together the 2 halves of SecY. May contact the channel plug during translocation. The sequence is that of Protein translocase subunit SecE from Vibrio cholerae serotype O1 (strain ATCC 39315 / El Tor Inaba N16961).